We begin with the raw amino-acid sequence, 256 residues long: Thiazole synthase (256 aa).

Lys96 (schiff-base intermediate with DXP) is an active-site residue. 1-deoxy-D-xylulose 5-phosphate is bound by residues Gly157, 183 to 184 (AG), and 205 to 206 (NT).

This sequence belongs to the ThiG family. Homotetramer. Forms heterodimers with either ThiH or ThiS.

Its subcellular location is the cytoplasm. The enzyme catalyses [ThiS sulfur-carrier protein]-C-terminal-Gly-aminoethanethioate + 2-iminoacetate + 1-deoxy-D-xylulose 5-phosphate = [ThiS sulfur-carrier protein]-C-terminal Gly-Gly + 2-[(2R,5Z)-2-carboxy-4-methylthiazol-5(2H)-ylidene]ethyl phosphate + 2 H2O + H(+). It functions in the pathway cofactor biosynthesis; thiamine diphosphate biosynthesis. Functionally, catalyzes the rearrangement of 1-deoxy-D-xylulose 5-phosphate (DXP) to produce the thiazole phosphate moiety of thiamine. Sulfur is provided by the thiocarboxylate moiety of the carrier protein ThiS. In vitro, sulfur can be provided by H(2)S. This chain is Thiazole synthase, found in Clostridium beijerinckii (strain ATCC 51743 / NCIMB 8052) (Clostridium acetobutylicum).